Reading from the N-terminus, the 226-residue chain is Prolactin (226 aa).

The signal sequence occupies residues 1–29; sequence MNSQGSDRKAVTLLLLVMSNLLFCQNAHP. C33 and C38 are oxidised to a cystine. Residues S53 and S117 each carry the phosphoserine modification. Intrachain disulfides connect C85–C201 and C218–C226.

Belongs to the somatotropin/prolactin family. As to quaternary structure, interacts with PRLR.

The protein localises to the secreted. Prolactin acts primarily on the mammary gland by promoting lactation. The polypeptide is Prolactin (PRL) (Mesocricetus auratus (Golden hamster)).